A 251-amino-acid polypeptide reads, in one-letter code: Adenosylcobinamide-GDP ribazoletransferase (251 aa).

Transmembrane regions (helical) follow at residues 29–49 (FAGM…ILAV), 65–85 (SLLI…DGAM), 110–130 (AFGA…LCYL), 136–156 (LLIL…IVRY), 175–195 (AIDL…IARF), and 198–218 (LTVA…TGAW).

It belongs to the CobS family. Mg(2+) is required as a cofactor.

The protein resides in the cell inner membrane. It carries out the reaction alpha-ribazole + adenosylcob(III)inamide-GDP = adenosylcob(III)alamin + GMP + H(+). It catalyses the reaction alpha-ribazole 5'-phosphate + adenosylcob(III)inamide-GDP = adenosylcob(III)alamin 5'-phosphate + GMP + H(+). The protein operates within cofactor biosynthesis; adenosylcobalamin biosynthesis; adenosylcobalamin from cob(II)yrinate a,c-diamide: step 7/7. In terms of biological role, joins adenosylcobinamide-GDP and alpha-ribazole to generate adenosylcobalamin (Ado-cobalamin). Also synthesizes adenosylcobalamin 5'-phosphate from adenosylcobinamide-GDP and alpha-ribazole 5'-phosphate. The protein is Adenosylcobinamide-GDP ribazoletransferase of Synechococcus elongatus (strain ATCC 33912 / PCC 7942 / FACHB-805) (Anacystis nidulans R2).